Here is a 187-residue protein sequence, read N- to C-terminus: Signal peptidase I U (187 aa).

The Cytoplasmic segment spans residues 1–16 (MNAKTITLKKKRKIKT). Residues 17-37 (IVVLSIIMIAALIFTIRLVFY) form a helical membrane-spanning segment. The Extracellular portion of the chain corresponds to 38-187 (KPFLIEGSSM…YPFGEMRQAK (150 aa)). Residues Ser-46 and Lys-88 contribute to the active site.

The protein belongs to the peptidase S26 family.

The protein resides in the cell membrane. It catalyses the reaction Cleavage of hydrophobic, N-terminal signal or leader sequences from secreted and periplasmic proteins.. The sequence is that of Signal peptidase I U (sipU) from Bacillus subtilis (strain 168).